The chain runs to 184 residues: NADH-quinone oxidoreductase subunit B (184 aa).

C63, C64, C128, and C158 together coordinate [4Fe-4S] cluster.

This sequence belongs to the complex I 20 kDa subunit family. As to quaternary structure, NDH-1 is composed of 14 different subunits. Subunits NuoB, C, D, E, F, and G constitute the peripheral sector of the complex. [4Fe-4S] cluster is required as a cofactor.

It is found in the cell inner membrane. The catalysed reaction is a quinone + NADH + 5 H(+)(in) = a quinol + NAD(+) + 4 H(+)(out). Its function is as follows. NDH-1 shuttles electrons from NADH, via FMN and iron-sulfur (Fe-S) centers, to quinones in the respiratory chain. Couples the redox reaction to proton translocation (for every two electrons transferred, four hydrogen ions are translocated across the cytoplasmic membrane), and thus conserves the redox energy in a proton gradient. The sequence is that of NADH-quinone oxidoreductase subunit B from Stenotrophomonas maltophilia (strain R551-3).